Here is a 588-residue protein sequence, read N- to C-terminus: Phomenoic acid biosynthesis cluster cytochrome P450 monooxygenase (588 aa).

Residues 1 to 21 (MSFARIFITILLLFILRRAFK) form the signal peptide. Asparagine 293 is a glycosylation site (N-linked (GlcNAc...) asparagine). Over residues 467-486 (HQSDPDRFKPSPDAPDEKLF) the composition is skewed to basic and acidic residues. A disordered region spans residues 467–490 (HQSDPDRFKPSPDAPDEKLFRPSR). Cysteine 519 contributes to the heme binding site.

Belongs to the cytochrome P450 family. Heme serves as cofactor.

It functions in the pathway secondary metabolite biosynthesis. Functionally, cytochrome P450 monooxygenase; part of the gene cluster that mediates the biosynthesis of phomenoic acid, a long chain aliphatic carboxylic acid that does not appear to be essential for pathogenicity but may play a role in allowing to outcompete other fungi in the environmental niche via its antifungal properties. The polyketide synthase produces the long methylated aliphatic carboxylic acid chain of phomenoic acid. The cluster-specific cytochrome P450 monooxygenase may then hydroxylate the methyl group of carbon 31. The putative dehydrogenase YogA, which has no obvious role in phomenoic acid biosynthesis, may further modify phomenoic acid to produce a compound not identified yet. This Leptosphaeria maculans (strain JN3 / isolate v23.1.3 / race Av1-4-5-6-7-8) (Blackleg fungus) protein is Phomenoic acid biosynthesis cluster cytochrome P450 monooxygenase.